The sequence spans 358 residues: Alpha-2-HS-glycoprotein (358 aa).

A signal peptide spans 1–18; the sequence is MKFFVLFLCLVQLWGCHS. A Cystatin fetuin-A-type 1 domain is found at 27 to 133; the sequence is ERNPACDDPE…QFSVVFAKCE (107 aa). 6 cysteine pairs are disulfide-bonded: cysteine 32–cysteine 349, cysteine 89–cysteine 100, cysteine 114–cysteine 132, cysteine 146–cysteine 149, cysteine 208–cysteine 218, and cysteine 229–cysteine 246. Asparagine 99 carries an N-linked (GlcNAc...) asparagine glycan. Serine 134 carries the phosphoserine modification. At threonine 135 the chain carries Phosphothreonine. Phosphoserine is present on serine 138. Residues 144–254 enclose the Cystatin fetuin-A-type 2 domain; the sequence is KVCPQCPLLT…TCTVFPTQPV (111 aa). 2 N-linked (GlcNAc...) asparagine glycosylation sites follow: asparagine 156 and asparagine 176. The segment at 257–288 is disordered; that stretch reads LPQPDAASSANPPPAADPAVSPPSSPSVPVDS. A compositionally biased stretch (pro residues) spans 267–282; it reads NPPPAADPAVSPPSSP. A phosphoserine mark is found at serine 318 and serine 320. The segment at 320-350 is disordered; the sequence is SGEAFGPRQKPKVTHPGVASGVGPVPPPPCP.

Belongs to the fetuin family. Phosphorylated by FAM20C in the extracellular medium. Bone marrow.

The protein resides in the secreted. The chain is Alpha-2-HS-glycoprotein (AHSG) from Cavia porcellus (Guinea pig).